The sequence spans 326 residues: Meso-diaminopimelate D-dehydrogenase (326 aa).

Residues 11-14 (YGNL), 35-37 (TRR), 69-72 (CGGS), 92-94 (SFD), and 121-125 (VGWDP) each bind NADP(+). Residues Asp-94, Asp-124, Trp-148, 154 to 155 (QG), Thr-173, Arg-199, His-249, and Asn-276 each bind substrate.

Belongs to the diaminopimelate dehydrogenase family. Homodimer.

The catalysed reaction is meso-2,6-diaminopimelate + NADP(+) + H2O = (S)-2-amino-6-oxoheptanedioate + NH4(+) + NADPH + H(+). It participates in amino-acid biosynthesis; L-lysine biosynthesis via DAP pathway; DL-2,6-diaminopimelate from (S)-tetrahydrodipicolinate: step 1/1. Its activity is regulated as follows. L,L-2,6-diaminopimelate, D,D-2,6-diaminopimelate and meso-2,5-diaminoadipate competitively inhibit the oxidation of meso-2,6-diaminopimelate. L-2-amino-6-methylene-pimelate is also a potent competitive inhibitor (5 uM) of this reaction. Glyoxylate inhibits the reductive amination of L-2-amino-6-oxopimelate about 30%. The enzyme is inhibited completely by p-chloromercuribenzoate and HgCl(2) in vitro. In terms of biological role, catalyzes the reversible NADPH-dependent reductive amination of L-2-amino-6-oxopimelate, the acyclic form of L-tetrahydrodipicolinate, to generate the meso compound, D,L-2,6-diaminopimelate. Probably plays a role in lysine biosynthesis. Exhibits a high substrate specificity, since alpha-ketoglutarate, pyruvate, oxaloacetate, glyoxylate, alpha-ketobutyrate, alpha-ketovalerate, alpha-ketocaproate, alpha-ketoisocaproate, alpha-ketoisovalerate, and phenylpyruvate are not substrates for the reductive amination reaction, and L,L-2,6-diaminopimelate, D,D-2,6-diaminopimelate, DL-alpha-aminopimelate, meso- and DL-2,5-diaminoadipate, L-djenkolate, L-cystine, L-lysine, S-(beta-aminoethy1)-L-homocysteine, L-ornithine, L-arginine, L-alpha,gamma-diaminobutyrate, L-histidine, L-phenylalanine, L-tyrosine, L-glutamate, L-aspartate, L-leucine, L-valine, L-methionine, L-serine, L-alanine, L-alpha-aminobutyrate, D-lysine, D-glutamate, D-leucine, D-alanine, D-phenylalanine, epsilon-aminocaproate, 7-aminoheptanoate, and 8-aminooctanoate are not substrates for the oxidative deamination reaction. Cannot use NAD(+) or NAD(+) analogs instead of NADP(+) for the oxidative deamination reaction. In Lysinibacillus sphaericus (Bacillus sphaericus), this protein is Meso-diaminopimelate D-dehydrogenase (dapdh).